The primary structure comprises 437 residues: Chromosomal replication initiator protein DnaA (437 aa).

The domain I, interacts with DnaA modulators stretch occupies residues Met1–Glu74. The domain II stretch occupies residues Glu74–Phe98. The tract at residues Gln99–Lys315 is domain III, AAA+ region. Gly142, Gly144, Lys145, and Thr146 together coordinate ATP. A domain IV, binds dsDNA region spans residues Lys316 to Gln437.

Belongs to the DnaA family. Oligomerizes as a right-handed, spiral filament on DNA at oriC.

It localises to the cytoplasm. Plays an essential role in the initiation and regulation of chromosomal replication. ATP-DnaA binds to the origin of replication (oriC) to initiate formation of the DNA replication initiation complex once per cell cycle. Binds the DnaA box (a 9 base pair repeat at the origin) and separates the double-stranded (ds)DNA. Forms a right-handed helical filament on oriC DNA; dsDNA binds to the exterior of the filament while single-stranded (ss)DNA is stabiized in the filament's interior. The ATP-DnaA-oriC complex binds and stabilizes one strand of the AT-rich DNA unwinding element (DUE), permitting loading of DNA polymerase. After initiation quickly degrades to an ADP-DnaA complex that is not apt for DNA replication. Binds acidic phospholipids. The sequence is that of Chromosomal replication initiator protein DnaA from Leptospira borgpetersenii serovar Hardjo-bovis (strain JB197).